The primary structure comprises 283 residues: 4-hydroxy-3-methylbut-2-enyl diphosphate reductase (283 aa).

Cysteine 12 is a binding site for [4Fe-4S] cluster. (2E)-4-hydroxy-3-methylbut-2-enyl diphosphate contacts are provided by histidine 41 and histidine 74. Histidine 41 and histidine 74 together coordinate dimethylallyl diphosphate. Histidine 41 and histidine 74 together coordinate isopentenyl diphosphate. Residue cysteine 96 coordinates [4Fe-4S] cluster. Histidine 124 serves as a coordination point for (2E)-4-hydroxy-3-methylbut-2-enyl diphosphate. Residue histidine 124 participates in dimethylallyl diphosphate binding. Histidine 124 is an isopentenyl diphosphate binding site. The active-site Proton donor is glutamate 126. Threonine 161 serves as a coordination point for (2E)-4-hydroxy-3-methylbut-2-enyl diphosphate. Cysteine 189 lines the [4Fe-4S] cluster pocket. Serine 217, asparagine 219, and serine 261 together coordinate (2E)-4-hydroxy-3-methylbut-2-enyl diphosphate. Positions 217, 219, and 261 each coordinate dimethylallyl diphosphate. The isopentenyl diphosphate site is built by serine 217, asparagine 219, and serine 261.

Belongs to the IspH family. [4Fe-4S] cluster serves as cofactor.

The catalysed reaction is isopentenyl diphosphate + 2 oxidized [2Fe-2S]-[ferredoxin] + H2O = (2E)-4-hydroxy-3-methylbut-2-enyl diphosphate + 2 reduced [2Fe-2S]-[ferredoxin] + 2 H(+). The enzyme catalyses dimethylallyl diphosphate + 2 oxidized [2Fe-2S]-[ferredoxin] + H2O = (2E)-4-hydroxy-3-methylbut-2-enyl diphosphate + 2 reduced [2Fe-2S]-[ferredoxin] + 2 H(+). The protein operates within isoprenoid biosynthesis; dimethylallyl diphosphate biosynthesis; dimethylallyl diphosphate from (2E)-4-hydroxy-3-methylbutenyl diphosphate: step 1/1. Its pathway is isoprenoid biosynthesis; isopentenyl diphosphate biosynthesis via DXP pathway; isopentenyl diphosphate from 1-deoxy-D-xylulose 5-phosphate: step 6/6. Catalyzes the conversion of 1-hydroxy-2-methyl-2-(E)-butenyl 4-diphosphate (HMBPP) into a mixture of isopentenyl diphosphate (IPP) and dimethylallyl diphosphate (DMAPP). Acts in the terminal step of the DOXP/MEP pathway for isoprenoid precursor biosynthesis. The sequence is that of 4-hydroxy-3-methylbut-2-enyl diphosphate reductase from Anaeromyxobacter sp. (strain Fw109-5).